The sequence spans 211 residues: Large ribosomal subunit protein bL9 (211 aa).

Residues 180-211 (DDIGAAGMDDDDDDAPAPAQADPSSEESSEED) form a disordered region.

The protein belongs to the bacterial ribosomal protein bL9 family.

Binds to the 23S rRNA. The chain is Large ribosomal subunit protein bL9 from Jannaschia sp. (strain CCS1).